We begin with the raw amino-acid sequence, 127 residues long: UPF0166 protein PH1503 (127 aa).

It belongs to the UPF0166 family.

This Pyrococcus horikoshii (strain ATCC 700860 / DSM 12428 / JCM 9974 / NBRC 100139 / OT-3) protein is UPF0166 protein PH1503.